Here is a 177-residue protein sequence, read N- to C-terminus: Large ribosomal subunit protein uL6 (177 aa).

Belongs to the universal ribosomal protein uL6 family. In terms of assembly, part of the 50S ribosomal subunit.

Its function is as follows. This protein binds to the 23S rRNA, and is important in its secondary structure. It is located near the subunit interface in the base of the L7/L12 stalk, and near the tRNA binding site of the peptidyltransferase center. This is Large ribosomal subunit protein uL6 from Bordetella avium (strain 197N).